Here is a 121-residue protein sequence, read N- to C-terminus: Large ribosomal subunit protein bL21c (121 aa).

This sequence belongs to the bacterial ribosomal protein bL21 family. As to quaternary structure, part of the 50S ribosomal subunit.

Its subcellular location is the plastid. The protein localises to the chloroplast. In terms of biological role, this protein binds to 23S rRNA. The sequence is that of Large ribosomal subunit protein bL21c from Huperzia lucidula (Shining clubmoss).